The chain runs to 392 residues: Chaperone protein DnaJ (392 aa).

A J domain is found at 2 to 67 (DYYTILGVAK…QKRESYDRYG (66 aa)). A CR-type zinc finger spans residues 149 to 227 (GVEKELLVSG…CRGQGRIKDK (79 aa)). Zn(2+) is bound by residues cysteine 162, cysteine 165, cysteine 179, cysteine 182, cysteine 201, cysteine 204, cysteine 215, and cysteine 218. CXXCXGXG motif repeat units lie at residues 162–169 (CDACSGSG), 179–186 (CDRCKGSG), 201–208 (CPDCSGEG), and 215–222 (CSECRGQG).

This sequence belongs to the DnaJ family. As to quaternary structure, homodimer. Zn(2+) serves as cofactor.

Its subcellular location is the cytoplasm. Participates actively in the response to hyperosmotic and heat shock by preventing the aggregation of stress-denatured proteins and by disaggregating proteins, also in an autonomous, DnaK-independent fashion. Unfolded proteins bind initially to DnaJ; upon interaction with the DnaJ-bound protein, DnaK hydrolyzes its bound ATP, resulting in the formation of a stable complex. GrpE releases ADP from DnaK; ATP binding to DnaK triggers the release of the substrate protein, thus completing the reaction cycle. Several rounds of ATP-dependent interactions between DnaJ, DnaK and GrpE are required for fully efficient folding. Also involved, together with DnaK and GrpE, in the DNA replication of plasmids through activation of initiation proteins. In Chlamydia muridarum (strain MoPn / Nigg), this protein is Chaperone protein DnaJ.